Reading from the N-terminus, the 539-residue chain is Phosphoenolpyruvate carboxykinase (ATP) (539 aa).

Residues Arg61, Tyr195, and Lys201 each coordinate substrate. ATP contacts are provided by residues Lys201, His220, and 238 to 246 (GLSGTGKTT). Residues Lys201 and His220 each coordinate Mn(2+). Residue Asp259 coordinates Mn(2+). Positions 287, 325, and 450 each coordinate ATP. Arg325 contributes to the substrate binding site.

Belongs to the phosphoenolpyruvate carboxykinase (ATP) family. The cofactor is Mn(2+).

The protein resides in the cytoplasm. The catalysed reaction is oxaloacetate + ATP = phosphoenolpyruvate + ADP + CO2. It participates in carbohydrate biosynthesis; gluconeogenesis. Its function is as follows. Involved in the gluconeogenesis. Catalyzes the conversion of oxaloacetate (OAA) to phosphoenolpyruvate (PEP) through direct phosphoryl transfer between the nucleoside triphosphate and OAA. The chain is Phosphoenolpyruvate carboxykinase (ATP) from Methylorubrum populi (strain ATCC BAA-705 / NCIMB 13946 / BJ001) (Methylobacterium populi).